The sequence spans 197 residues: Putative peptidyl-prolyl cis-trans isomerase (197 aa).

The PPIase cyclophilin-type domain maps to 14–195 (NEIKLIMHTN…HDITIDSIEI (182 aa)).

It belongs to the cyclophilin-type PPIase family.

The catalysed reaction is [protein]-peptidylproline (omega=180) = [protein]-peptidylproline (omega=0). Its function is as follows. PPIases accelerate the folding of proteins. It catalyzes the cis-trans isomerization of proline imidic peptide bonds in oligopeptides. The polypeptide is Putative peptidyl-prolyl cis-trans isomerase (Staphylococcus saprophyticus subsp. saprophyticus (strain ATCC 15305 / DSM 20229 / NCIMB 8711 / NCTC 7292 / S-41)).